A 377-amino-acid chain; its full sequence is MSKRDFYEVLGVDRSADEREIKKAYRKLAMKYHPDRNSDDPDAEEKFKEASMAYEVLSDKEKRSAYDRMGHAAFENGMGGGGFGGAGAGNFQDIFGDIFGNFGDIFGQSRGGGGRQRRGSDLRYVIELSLEEAVRGCKKEISFTAPAPCETCDGKGAKNASDIQTCSTCGGHGQVRMQQGFFAVQQTCPNCGGSGQEIKNPCNDCHGTGVKDKSRTLEVSIPAGVDDGDRVRLAGEGEAGGAGVQNGDLYVEVRVKEHPVFKRQGADLYMDVPVSITDAALGKEVEIPTLDGKVKIKVAEGTQSGKLLRVRGKGVTPVRTTMKGDLICRIMVETPVNLTREQKDLLRQFQDTLDGDSKHHQSPKKKSFFEKLGDLFD.

A J domain is found at 5 to 70; the sequence is DFYEVLGVDR…EKRSAYDRMG (66 aa). The segment at 136 to 214 adopts a CR-type zinc-finger fold; it reads GCKKEISFTA…CHGTGVKDKS (79 aa). Zn(2+)-binding residues include C149, C152, C166, C169, C188, C191, C202, and C205. CXXCXGXG motif repeat units follow at residues 149–156, 166–173, 188–195, and 202–209; these read CETCDGKG, CSTCGGHG, CPNCGGSG, and CNDCHGTG. Residues 353–377 are disordered; that stretch reads LDGDSKHHQSPKKKSFFEKLGDLFD. Positions 367 to 377 are enriched in basic and acidic residues; sequence SFFEKLGDLFD.

The protein belongs to the DnaJ family. In terms of assembly, homodimer. Zn(2+) is required as a cofactor.

The protein localises to the cytoplasm. Participates actively in the response to hyperosmotic and heat shock by preventing the aggregation of stress-denatured proteins and by disaggregating proteins, also in an autonomous, DnaK-independent fashion. Unfolded proteins bind initially to DnaJ; upon interaction with the DnaJ-bound protein, DnaK hydrolyzes its bound ATP, resulting in the formation of a stable complex. GrpE releases ADP from DnaK; ATP binding to DnaK triggers the release of the substrate protein, thus completing the reaction cycle. Several rounds of ATP-dependent interactions between DnaJ, DnaK and GrpE are required for fully efficient folding. Also involved, together with DnaK and GrpE, in the DNA replication of plasmids through activation of initiation proteins. The chain is Chaperone protein DnaJ from Psychrobacter sp. (strain PRwf-1).